A 194-amino-acid polypeptide reads, in one-letter code: UPF0301 protein BT_0659 (194 aa).

This sequence belongs to the UPF0301 (AlgH) family.

This is UPF0301 protein BT_0659 from Bartonella tribocorum (strain CIP 105476 / IBS 506).